We begin with the raw amino-acid sequence, 566 residues long: Acyl-CoA synthetase ALT10 (566 aa).

Residue 196-207 participates in AMP binding; that stretch reads MLFTSGTTGAPK. The interval 473-551 is AMP-binding; that stretch reads EVEHAALSHE…DAVHYNRTGK (79 aa).

Belongs to the ATP-dependent AMP-binding enzyme family.

The protein operates within mycotoxin biosynthesis. Its function is as follows. Acyl-CoA synthetase; part of the gene cluster that mediates the biosynthesis of the host-selective toxins (HSTs) AAL-toxins, sphinganine-analog mycotoxins responsible for Alternaria stem canker on tomato by the tomato pathotype. The biosynthesis starts with the polyketide synthase ALT1-catalyzed C-16 carbon chain assembly from one starter acetyl-CoA unit with malonyl-CoA extender units. ALT1 also selectively transfers methyl groups at the first and the third cycle of chain elongation for AAL toxin. The C-16 polyketide chain is released from the enzyme by a nucleophilic attack of a carbanion, which is derived from R-carbon of glycin by decarboxylation, on the carbonyl carbon of polyketide acyl chain. This step is probably catalyzed by a pyridoxal 5'-phosphate-dependent aminoacyl transferase ALT4. The respective functions of the other enzymes encoded by the cluster have still to be elucidated. The sphingosine N-acyltransferase-like protein ALT7 seems not to act as a resistance/self-tolerance factor against the toxin in the toxin biosynthetic gene cluster, contrary to what is expected. The protein is Acyl-CoA synthetase ALT10 of Alternaria alternata (Alternaria rot fungus).